We begin with the raw amino-acid sequence, 566 residues long: Proline--tRNA ligase (566 aa).

This sequence belongs to the class-II aminoacyl-tRNA synthetase family. ProS type 1 subfamily. In terms of assembly, homodimer.

It is found in the cytoplasm. It catalyses the reaction tRNA(Pro) + L-proline + ATP = L-prolyl-tRNA(Pro) + AMP + diphosphate. Catalyzes the attachment of proline to tRNA(Pro) in a two-step reaction: proline is first activated by ATP to form Pro-AMP and then transferred to the acceptor end of tRNA(Pro). As ProRS can inadvertently accommodate and process non-cognate amino acids such as alanine and cysteine, to avoid such errors it has two additional distinct editing activities against alanine. One activity is designated as 'pretransfer' editing and involves the tRNA(Pro)-independent hydrolysis of activated Ala-AMP. The other activity is designated 'posttransfer' editing and involves deacylation of mischarged Ala-tRNA(Pro). The misacylated Cys-tRNA(Pro) is not edited by ProRS. This chain is Proline--tRNA ligase, found in Exiguobacterium sibiricum (strain DSM 17290 / CCUG 55495 / CIP 109462 / JCM 13490 / 255-15).